A 799-amino-acid polypeptide reads, in one-letter code: Leucine--tRNA ligase (799 aa).

A 'HIGH' region motif is present at residues P39–H50. A 'KMSKS' region motif is present at residues K575–S579. K578 is an ATP binding site.

This sequence belongs to the class-I aminoacyl-tRNA synthetase family.

It localises to the cytoplasm. It catalyses the reaction tRNA(Leu) + L-leucine + ATP = L-leucyl-tRNA(Leu) + AMP + diphosphate. The polypeptide is Leucine--tRNA ligase (Malacoplasma penetrans (strain HF-2) (Mycoplasma penetrans)).